The sequence spans 291 residues: Inositol-1-monophosphatase (291 aa).

Mg(2+) contacts are provided by E83, D104, I106, and D107. E83 is a substrate binding site. Residues 106 to 109 (IDGT), R206, and D235 each bind substrate. D235 is a binding site for Mg(2+).

This sequence belongs to the inositol monophosphatase superfamily. Mg(2+) serves as cofactor.

The enzyme catalyses a myo-inositol phosphate + H2O = myo-inositol + phosphate. The chain is Inositol-1-monophosphatase (suhB) from Mycobacterium leprae (strain TN).